A 354-amino-acid polypeptide reads, in one-letter code: MAWLQPTLCRKELESRQTSGLDAAMKAAGKKYFGTALTVRNDAGETNVLNTKGEFGSITPENAMKWEAIQPNRGQFNWGPADQHANAATQRGMELRCHTLVWHSQLPSWVANGNWNNQTLQQVMKDHINAVMGRYKGKCTHWDVVNEALNEDGTYRDSVFYRVIGEAFIPIAFRMVLAADPTTKLYYNDYNLEYGGAKTAGAIRITKLIQSYGLRIDGVGLQAHMTSESTPTQSTVTPSRANLASVLNSFTKLNVDVAYTELDIRMNTPANQQKLQANAAAYARMVGSCMDVKRCVGVTVWGISDKYSWVPGTFPGEGSALLWDDNFNKKPSYTSSLNTIRACWKCHRLLVSIS.

Residues 19-339 (SGLDAAMKAA…KPSYTSSLNT (321 aa)) form the GH10 domain. An N-linked (GlcNAc...) asparagine glycan is attached at N117. Catalysis depends on E147, which acts as the Proton donor. Residue E261 is the Nucleophile of the active site. C289 and C295 are disulfide-bonded.

This sequence belongs to the glycosyl hydrolase 10 (cellulase F) family.

It localises to the secreted. It catalyses the reaction Endohydrolysis of (1-&gt;4)-beta-D-xylosidic linkages in xylans.. The protein operates within glycan degradation; xylan degradation. In terms of biological role, endo-1,4-beta-xylanase involved in the hydrolysis of xylan, a major structural heterogeneous polysaccharide found in plant biomass representing the second most abundant polysaccharide in the biosphere, after cellulose. Plays an important role in causing fusarium head blight (FHB) on cereal crops. The polypeptide is Endo-1,4-beta-xylanase 1 (XYL1) (Gibberella zeae (strain ATCC MYA-4620 / CBS 123657 / FGSC 9075 / NRRL 31084 / PH-1) (Wheat head blight fungus)).